Here is a 156-residue protein sequence, read N- to C-terminus: Sperm acrosome-associated protein 5 (156 aa).

The first 18 residues, 1–18, serve as a signal peptide directing secretion; it reads MQVSGTIVVILMAANVEA. The 129-residue stretch at 19–147 folds into the C-type lysozyme domain; the sequence is KIYERCDLAK…SEWLRGCHMN (129 aa). 4 disulfides stabilise this stretch: Cys-24/Cys-144, Cys-48/Cys-132, Cys-82/Cys-97, and Cys-93/Cys-111. Residue Glu-53 is part of the active site.

It belongs to the glycosyl hydrolase 22 family.

The protein localises to the secreted. It carries out the reaction Hydrolysis of (1-&gt;4)-beta-linkages between N-acetylmuramic acid and N-acetyl-D-glucosamine residues in a peptidoglycan and between N-acetyl-D-glucosamine residues in chitodextrins.. The chain is Sperm acrosome-associated protein 5 (SPACA5) from Bos taurus (Bovine).